We begin with the raw amino-acid sequence, 539 residues long: Propionyl-CoA carboxylase beta chain, mitochondrial (539 aa).

The N-terminal 28 residues, 1 to 28 (MAAAVRVTAARARLRVVVRSLHAGVRSL), are a transit peptide targeting the mitochondrion. The CoA carboxyltransferase N-terminal domain occupies 32–290 (PVSVNERIEN…SNQDPAPIRE (259 aa)). The tract at residues 32-533 (PVSVNERIEN…SKKVQRPWRK (502 aa)) is carboxyltransferase. Position 71 is a phosphoserine (Ser71). Lys99 is modified (N6-acetyllysine; alternate). N6-succinyllysine; alternate is present on Lys99. Residues 294-533 (PSDRLVPELD…SKKVQRPWRK (240 aa)) enclose the CoA carboxyltransferase C-terminal domain. The tract at residues 325 to 358 (DERDFFEIMPNYAKNIIVGFARMNGRTVGIVGNQ) is acyl-CoA binding. Residues Lys474 and Lys489 each carry the N6-acetyllysine; alternate modification. An N6-succinyllysine; alternate mark is found at Lys474 and Lys489.

Belongs to the AccD/PCCB family. In terms of assembly, the holoenzyme is a dodecamer composed of 6 PCCA/alpha subunits and 6 PCCB/beta subunits.

It is found in the mitochondrion matrix. The catalysed reaction is propanoyl-CoA + hydrogencarbonate + ATP = (S)-methylmalonyl-CoA + ADP + phosphate + H(+). It catalyses the reaction butanoyl-CoA + hydrogencarbonate + ATP = (2S)-ethylmalonyl-CoA + ADP + phosphate + H(+). The protein operates within metabolic intermediate metabolism; propanoyl-CoA degradation; succinyl-CoA from propanoyl-CoA: step 1/3. In terms of biological role, this is one of the 2 subunits of the biotin-dependent propionyl-CoA carboxylase (PCC), a mitochondrial enzyme involved in the catabolism of odd chain fatty acids, branched-chain amino acids isoleucine, threonine, methionine, and valine and other metabolites. Propionyl-CoA carboxylase catalyzes the carboxylation of propionyl-CoA/propanoyl-CoA to D-methylmalonyl-CoA/(S)-methylmalonyl-CoA. Within the holoenzyme, the alpha subunit catalyzes the ATP-dependent carboxylation of the biotin carried by the biotin carboxyl carrier (BCC) domain, while the beta subunit then transfers the carboxyl group from carboxylated biotin to propionyl-CoA. Propionyl-CoA carboxylase also significantly acts on butyryl-CoA/butanoyl-CoA, which is converted to ethylmalonyl-CoA/(2S)-ethylmalonyl-CoA at a much lower rate. Other alternative minor substrates include (2E)-butenoyl-CoA/crotonoyl-CoA. The protein is Propionyl-CoA carboxylase beta chain, mitochondrial of Sus scrofa (Pig).